The sequence spans 122 residues: Large ribosomal subunit protein uL14 (122 aa).

The protein belongs to the universal ribosomal protein uL14 family. As to quaternary structure, part of the 50S ribosomal subunit. Forms a cluster with proteins L3 and L19. In the 70S ribosome, L14 and L19 interact and together make contacts with the 16S rRNA in bridges B5 and B8.

Binds to 23S rRNA. Forms part of two intersubunit bridges in the 70S ribosome. The polypeptide is Large ribosomal subunit protein uL14 (Pseudomonas savastanoi pv. phaseolicola (strain 1448A / Race 6) (Pseudomonas syringae pv. phaseolicola (strain 1448A / Race 6))).